We begin with the raw amino-acid sequence, 423 residues long: POU domain, class 5, transcription factor 1.3 (423 aa).

Residues Gly-85–Thr-211 form a disordered region. Over residues Pro-94–Ser-110 the composition is skewed to basic and acidic residues. 3 stretches are compositionally biased toward polar residues: residues Ser-111–Met-120, Pro-156–Asn-173, and Pro-194–Ser-203. In terms of domain architecture, POU-specific spans Glu-207 to Glu-281. A DNA-binding region (homeobox) is located at residues Lys-301–Ser-360.

This sequence belongs to the POU transcription factor family. Class-5 subfamily. Interacts with the transcription factors tcf7l1/tcf3 and vegt.

It localises to the nucleus. Its function is as follows. Transcription factor that binds to the octamer motif (5'-ATTTGCAT-3'). Antagonizes the activity of nodal/activin signaling during gastrulation to suppress mesendoderm formation. Acts maternally to inhibit vegt and beta-catenin-activated gene transcription, probably by forming a transcriptional repression complex on the promoters of target genes. Binds to an octamer motif in interspersed RNA. The chain is POU domain, class 5, transcription factor 1.3 (pou5f1.3) from Xenopus tropicalis (Western clawed frog).